Consider the following 321-residue polypeptide: Lipoyl synthase (321 aa).

[4Fe-4S] cluster is bound by residues Cys-68, Cys-73, Cys-79, Cys-94, Cys-98, Cys-101, and Ser-308. Residues 80–297 (FNHGTATFMI…KEIALELGFT (218 aa)) enclose the Radical SAM core domain.

Belongs to the radical SAM superfamily. Lipoyl synthase family. [4Fe-4S] cluster serves as cofactor.

Its subcellular location is the cytoplasm. The catalysed reaction is [[Fe-S] cluster scaffold protein carrying a second [4Fe-4S](2+) cluster] + N(6)-octanoyl-L-lysyl-[protein] + 2 oxidized [2Fe-2S]-[ferredoxin] + 2 S-adenosyl-L-methionine + 4 H(+) = [[Fe-S] cluster scaffold protein] + N(6)-[(R)-dihydrolipoyl]-L-lysyl-[protein] + 4 Fe(3+) + 2 hydrogen sulfide + 2 5'-deoxyadenosine + 2 L-methionine + 2 reduced [2Fe-2S]-[ferredoxin]. Its pathway is protein modification; protein lipoylation via endogenous pathway; protein N(6)-(lipoyl)lysine from octanoyl-[acyl-carrier-protein]: step 2/2. Catalyzes the radical-mediated insertion of two sulfur atoms into the C-6 and C-8 positions of the octanoyl moiety bound to the lipoyl domains of lipoate-dependent enzymes, thereby converting the octanoylated domains into lipoylated derivatives. This chain is Lipoyl synthase, found in Vibrio campbellii (strain ATCC BAA-1116).